A 921-amino-acid chain; its full sequence is Leucine--tRNA ligase (921 aa).

The 'HIGH' region signature appears at 41 to 52 (PYPSGSGLHVGH). The short motif at 695–699 (KMSKS) is the 'KMSKS' region element. Lys-698 serves as a coordination point for ATP.

This sequence belongs to the class-I aminoacyl-tRNA synthetase family.

Its subcellular location is the cytoplasm. It catalyses the reaction tRNA(Leu) + L-leucine + ATP = L-leucyl-tRNA(Leu) + AMP + diphosphate. This Cytophaga hutchinsonii (strain ATCC 33406 / DSM 1761 / CIP 103989 / NBRC 15051 / NCIMB 9469 / D465) protein is Leucine--tRNA ligase.